The primary structure comprises 273 residues: Elongation factor Ts (273 aa).

Residues Thr-80–Val-83 are involved in Mg(2+) ion dislocation from EF-Tu.

It belongs to the EF-Ts family.

It localises to the cytoplasm. In terms of biological role, associates with the EF-Tu.GDP complex and induces the exchange of GDP to GTP. It remains bound to the aminoacyl-tRNA.EF-Tu.GTP complex up to the GTP hydrolysis stage on the ribosome. This is Elongation factor Ts from Tropheryma whipplei (strain Twist) (Whipple's bacillus).